We begin with the raw amino-acid sequence, 506 residues long: Mitogen-activated protein kinase 13 (506 aa).

The Protein kinase domain maps to 13-304 (YQIQEVVGKG…AEEALADPYF (292 aa)). Residues 19 to 27 (VGKGSYGVV) and K42 each bind ATP. D139 functions as the Proton acceptor in the catalytic mechanism. Residue T175 is modified to Phosphothreonine. The short motif at 175–177 (TDY) is the TXY element. Y177 is subject to Phosphotyrosine. A disordered region spans residues 384–421 (YSRGERSTPLRRQHASLPRERVCSSVDSNNQDSDNEER).

The protein belongs to the protein kinase superfamily. CMGC Ser/Thr protein kinase family. MAP kinase subfamily. Post-translationally, dually phosphorylated on Thr-175 and Tyr-177, which activates the enzyme.

It carries out the reaction L-seryl-[protein] + ATP = O-phospho-L-seryl-[protein] + ADP + H(+). The catalysed reaction is L-threonyl-[protein] + ATP = O-phospho-L-threonyl-[protein] + ADP + H(+). Its activity is regulated as follows. Activated by threonine and tyrosine phosphorylation. This chain is Mitogen-activated protein kinase 13 (MPK13), found in Oryza sativa subsp. indica (Rice).